Reading from the N-terminus, the 322-residue chain is Labrum-interacting protein from saliva LIPS-2 (322 aa).

The N-terminal stretch at Met1–Pro20 is a signal peptide. Cys27 and Cys62 are disulfide-bonded. N-linked (GlcNAc...) asparagine glycans are attached at residues Asn168 and Asn175. Cys249 and Cys295 are disulfide-bonded.

Monomer in solution. Interacts (via the N-terminal domain) with cuticular protein Cp19 (via the C-terminus). In terms of processing, proteolytically cleaved by human mast cell tryptase and chymase. Glycosylated. In terms of tissue distribution, female salivary gland (at protein level). Female saliva (at protein level).

Its subcellular location is the secreted. In terms of biological role, salivary protein that promotes mosquito blood feeding on the vertebrate host by inducing morphological changes in the mosquito labrum. Interacts with the mosquito labrum end tip and triggers salivation and probing. Modulates enzymatic activities of human tryptase and chymase. The chain is Labrum-interacting protein from saliva LIPS-2 from Aedes albopictus (Asian tiger mosquito).